The following is a 488-amino-acid chain: E3 ubiquitin-protein ligase RNF8 (488 aa).

An FHA domain is found at Val-38 to Leu-92. The required for interaction with PIWIL1 stretch occupies residues Gln-68 to Gly-72. Residues Asp-141–Leu-164 form a disordered region. A compositionally biased stretch (basic residues) spans Glu-145–Phe-156. Ser-157 is modified (phosphoserine). The segment at Cys-406–Arg-444 adopts an RING-type zinc-finger fold.

This sequence belongs to the RNF8 family. In terms of assembly, homodimer. Forms a E2-E3 ubiquitin ligase complex composed of the RNF8 homodimer and a E2 heterodimer of UBE2N and UBE2V2. Interacts with class III E2s, including UBE2E1, UBE2E2, and UBE2E3 and with UBE2N. Interacts with RXRA. Interacts (via FHA domain) with ATM-phosphorylated MDC1. Interacts (via FHA domain) with 'Thr-4829' phosphorylated HERC2 (via C-terminus). Interacts with PIWIL1; leading to sequester RNF8 in the cytoplasm. Interacts with WRAP53/TCAB1. (Microbial infection) May interact with the L.monocytogenes protein actA; however, given these errors in the sequence (AJ242721), the relevance of the interaction with actA remains to be confirmed. Post-translationally, autoubiquitinated through 'Lys-48' and 'Lys-63' of ubiquitin. 'Lys-63' polyubiquitination is mediated by UBE2N. 'Lys-29'-type polyubiquitination is also observed, but it doesn't require its own functional RING-type zinc finger.

Its subcellular location is the nucleus. The protein resides in the cytoplasm. It localises to the midbody. The protein localises to the chromosome. It is found in the telomere. The enzyme catalyses S-ubiquitinyl-[E2 ubiquitin-conjugating enzyme]-L-cysteine + [acceptor protein]-L-lysine = [E2 ubiquitin-conjugating enzyme]-L-cysteine + N(6)-ubiquitinyl-[acceptor protein]-L-lysine.. Its pathway is protein modification; protein ubiquitination. E3 ubiquitin-protein ligase that plays a key role in DNA damage signaling via 2 distinct roles: by mediating the 'Lys-63'-linked ubiquitination of histones H2A and H2AX and promoting the recruitment of DNA repair proteins at double-strand breaks (DSBs) sites, and by catalyzing 'Lys-48'-linked ubiquitination to remove target proteins from DNA damage sites. Following DNA DSBs, it is recruited to the sites of damage by ATM-phosphorylated MDC1 and catalyzes the 'Lys-63'-linked ubiquitination of histones H2A and H2AX, thereby promoting the formation of TP53BP1 and BRCA1 ionizing radiation-induced foci (IRIF). Also controls the recruitment of UIMC1-BRCC3 (RAP80-BRCC36) and PAXIP1/PTIP to DNA damage sites. Promotes the recruitment of NBN to DNA damage sites by catalyzing 'Lys-6'-linked ubiquitination of NBN. Also recruited at DNA interstrand cross-links (ICLs) sites and catalyzes 'Lys-63'-linked ubiquitination of histones H2A and H2AX, leading to recruitment of FAAP20 and Fanconi anemia (FA) complex, followed by interstrand cross-link repair. H2A ubiquitination also mediates the ATM-dependent transcriptional silencing at regions flanking DSBs in cis, a mechanism to avoid collision between transcription and repair intermediates. Promotes the formation of 'Lys-63'-linked polyubiquitin chains via interactions with the specific ubiquitin-conjugating UBE2N/UBC13 and ubiquitinates non-histone substrates such as PCNA. Substrates that are polyubiquitinated at 'Lys-63' are usually not targeted for degradation. Also catalyzes the formation of 'Lys-48'-linked polyubiquitin chains via interaction with the ubiquitin-conjugating UBE2L6/UBCH8, leading to degradation of substrate proteins such as CHEK2, JMJD2A/KDM4A and KU80/XRCC5: it is still unclear how the preference toward 'Lys-48'- versus 'Lys-63'-linked ubiquitination is regulated but it could be due to RNF8 ability to interact with specific E2 specific ligases. For instance, interaction with phosphorylated HERC2 promotes the association between RNF8 and UBE2N/UBC13 and favors the specific formation of 'Lys-63'-linked ubiquitin chains. Promotes non-homologous end joining (NHEJ) by promoting the 'Lys-48'-linked ubiquitination and degradation the of KU80/XRCC5. Following DNA damage, mediates the ubiquitination and degradation of JMJD2A/KDM4A in collaboration with RNF168, leading to unmask H4K20me2 mark and promote the recruitment of TP53BP1 at DNA damage sites. Following DNA damage, mediates the ubiquitination and degradation of POLD4/p12, a subunit of DNA polymerase delta. In the absence of POLD4, DNA polymerase delta complex exhibits higher proofreading activity. In addition to its function in damage signaling, also plays a role in higher-order chromatin structure by mediating extensive chromatin decondensation. Involved in the activation of ATM by promoting histone H2B ubiquitination, which indirectly triggers histone H4 'Lys-16' acetylation (H4K16ac), establishing a chromatin environment that promotes efficient activation of ATM kinase. Required in the testis, where it plays a role in the replacement of histones during spermatogenesis. At uncapped telomeres, promotes the joining of deprotected chromosome ends by inducing H2A ubiquitination and TP53BP1 recruitment, suggesting that it may enhance cancer development by aggravating telomere-induced genome instability in case of telomeric crisis. Promotes the assembly of RAD51 at DNA DSBs in the absence of BRCA1 and TP53BP1 Also involved in class switch recombination in immune system, via its role in regulation of DSBs repair. May be required for proper exit from mitosis after spindle checkpoint activation and may regulate cytokinesis. May play a role in the regulation of RXRA-mediated transcriptional activity. Not involved in RXRA ubiquitination by UBE2E2. The polypeptide is E3 ubiquitin-protein ligase RNF8 (Mus musculus (Mouse)).